The sequence spans 217 residues: Probable GTP-binding protein EngB (217 aa).

In terms of domain architecture, EngB-type G spans 29-213 (GPLEVAFAGR…RQAIGETVGV (185 aa)). GTP is bound by residues 37 to 44 (GRSNVGKS), 64 to 68 (GRTQE), 91 to 94 (DMPG), 158 to 161 (TKTD), and 192 to 194 (TSS). Mg(2+) is bound by residues Ser44 and Thr66.

It belongs to the TRAFAC class TrmE-Era-EngA-EngB-Septin-like GTPase superfamily. EngB GTPase family. Mg(2+) is required as a cofactor.

Necessary for normal cell division and for the maintenance of normal septation. The chain is Probable GTP-binding protein EngB from Rhizobium leguminosarum bv. trifolii (strain WSM2304).